A 184-amino-acid chain; its full sequence is MMSQPAKVLLLYAHPESQDSVANRVLLKPATQLSNVTAHDLYAHYPDFFIDIPREQALLREHEVIVFQRPLYTYSCPALLKEWLDRVLSRGFASGPGGNQLAGKYWRSVITTGEPESAYRYDALNRYPMSDVLRPFELAAGMCRMHWLSPIIIYWARRQSAQELASHARAYGDWLANPLSPGGR.

Belongs to the NAD(P)H dehydrogenase (quinone) family. KefG subfamily. As to quaternary structure, interacts with KefB.

The protein resides in the cell inner membrane. It catalyses the reaction a quinone + NADH + H(+) = a quinol + NAD(+). The catalysed reaction is a quinone + NADPH + H(+) = a quinol + NADP(+). In terms of biological role, regulatory subunit of a potassium efflux system that confers protection against electrophiles. Required for full activity of KefB. This is Glutathione-regulated potassium-efflux system ancillary protein KefG from Shigella dysenteriae serotype 1 (strain Sd197).